The primary structure comprises 97 residues: Unclassified hydrophobin F (97 aa).

The signal sequence occupies residues methionine 1–alanine 17. Intrachain disulfides connect cysteine 24-cysteine 75, cysteine 39-cysteine 67, cysteine 40-cysteine 58, and cysteine 76-cysteine 85.

It localises to the secreted. Its subcellular location is the cell wall. Its function is as follows. Aerial growth, conidiation, and dispersal of filamentous fungi in the environment rely upon a capability of their secreting small amphipathic proteins called hydrophobins (HPBs) with low sequence identity. Class I can self-assemble into an outermost layer of rodlet bundles on aerial cell surfaces, conferring cellular hydrophobicity that supports fungal growth, development and dispersal; whereas Class II form highly ordered films at water-air interfaces through intermolecular interactions but contribute nothing to the rodlet structure. In P.expansum, hydrophobins contribute to germination, tolerance to cold stress and mycotoxins patulin and citrinin production. HfbC, HfbD, HfbE, and HfbF have functional redundancy in fungal surface hydrophobicity. The sequence is that of Unclassified hydrophobin F from Penicillium expansum (Blue mold rot fungus).